Reading from the N-terminus, the 304-residue chain is Capsid protein (304 aa).

Basic and acidic residues-rich tracts occupy residues 1–24 and 32–54; these read MGDS…REAR and FEGK…EMSL. Positions 1–54 are disordered; sequence MGDSTKKAETAKDEGTSQERREARPLPTAADFEGKDTSENTDGRAADADGEMSL.

It belongs to the potexviruses coat protein family.

The protein localises to the virion. Its function is as follows. Required for genome encapsidation. Forms ribonucleoprotein complexes along with TGB1 helicase and viral RNA. This chain is Capsid protein, found in Potato virus M (strain Russian) (PVM).